Here is a 115-residue protein sequence, read N- to C-terminus: uncharacterized protein (115 aa).

This is an uncharacterized protein from Acanthamoeba polyphaga (Amoeba).